Consider the following 185-residue polypeptide: MSLEQVIKEIEQSQEIKKKEILENTKNILDKMEAEKKAKIDEIRALYQEKMRAESSRITASIIDKANIEARSILRNKIEEILEGYVSAAQEILRNIRNMPEYPALLNKMIEVAKKYLGQDCIIKVDSKDKAVAPSSGITYSNIDPYGGILASSRDGKVELDLRVSSIMEEVLEKIKVKIYTRLEE.

It belongs to the V-ATPase E subunit family. Has multiple subunits with at least A(3), B(3), C, D, E, F, H, I and proteolipid K(x).

The protein localises to the cell membrane. Component of the A-type ATP synthase that produces ATP from ADP in the presence of a proton gradient across the membrane. This chain is A-type ATP synthase subunit E, found in Thermoplasma volcanium (strain ATCC 51530 / DSM 4299 / JCM 9571 / NBRC 15438 / GSS1).